The primary structure comprises 517 residues: Mitochondrial division protein fszA (517 aa).

Residues 60-64 (GGGCN), 147-149 (GTG), Glu-178, Arg-182, and Asp-225 contribute to the GTP site. The disordered stretch occupies residues 496 to 517 (FTNGNNNKPYNNNKNTPGSNYE). Low complexity predominate over residues 497–517 (TNGNNNKPYNNNKNTPGSNYE).

Belongs to the FtsZ family.

It is found in the mitochondrion matrix. Its function is as follows. Probably involved in mitochondrion division process. When overexpressed, induces mitochondrial tubule formation. Binds to and hydrolyzes GTP. This Dictyostelium discoideum (Social amoeba) protein is Mitochondrial division protein fszA (fszA).